Here is a 350-residue protein sequence, read N- to C-terminus: Transmembrane protein 115 (350 aa).

Over 1-19 the chain is Cytoplasmic; it reads MQRALPGARQHLGAILASA. Positions 1–205 are mediates homooligomerization; it reads MQRALPGARQ…FGLLSSWVYL (205 aa). Residues 20–40 traverse the membrane as a helical segment; it reads SVVVKALCAVVLFLYLLSFAV. Residues 41-97 are Lumenal-facing; it reads DTGCLAVTPGYLFPPNFWIWTLATHGLMEQHVWDVAISLATVVVAGRLLEPLWGALE. Residues 98-118 form a helical membrane-spanning segment; sequence LLIFFSVVNVSVGLLGALAYL. At 119–126 the chain is on the cytoplasmic side; that stretch reads LTYMASFN. A helical membrane pass occupies residues 127–147; that stretch reads LVYLFTIRIHGALGFLGGVLV. The Lumenal portion of the chain corresponds to 148 to 165; the sequence is ALKQTMGDCVVLRVPQVR. A helical transmembrane segment spans residues 166 to 186; it reads VSVVPMLLLALLLLLRLATLL. Residues 187–350 are Cytoplasmic-facing; it reads QSPALASYGF…LITLETAPLL (164 aa). Residues 206 to 229 are mediates localization to the Golgi; the sequence is RFYQRHSRGRGDMADHFAFATFFP. Residues 299–350 are disordered; that stretch reads EDQSAWPSMDDDEEEAGAKTDSPLPLEEASTPPGKVTVPESSLITLETAPLL. Thr-329 carries the post-translational modification Phosphothreonine.

The protein belongs to the TMEM115 family. In terms of assembly, homooligomer. Interacts with COPB1. May interact with LMAN1. Interacts with the COG complex; probably through COG3.

It localises to the golgi apparatus. It is found in the golgi stack membrane. Functionally, may play a role in retrograde transport of proteins from the Golgi to the endoplasmic reticulum. May indirectly play a role in protein glycosylation in the Golgi. The sequence is that of Transmembrane protein 115 from Mus musculus (Mouse).